Here is a 470-residue protein sequence, read N- to C-terminus: Serine/threonine-protein kinase-like protein At1g28390 (470 aa).

The Protein kinase domain maps to F52 to V333. Residues L58–V66 and K81 each bind ATP. The Proton acceptor role is filled by D186. Phosphothreonine occurs at positions 221 and 226. A Phosphotyrosine modification is found at Y234.

This sequence belongs to the protein kinase superfamily. Ser/Thr protein kinase family.

The catalysed reaction is L-seryl-[protein] + ATP = O-phospho-L-seryl-[protein] + ADP + H(+). It catalyses the reaction L-threonyl-[protein] + ATP = O-phospho-L-threonyl-[protein] + ADP + H(+). This is Serine/threonine-protein kinase-like protein At1g28390 from Arabidopsis thaliana (Mouse-ear cress).